A 577-amino-acid polypeptide reads, in one-letter code: MNIQALLSEKVSQAMIAAGAPADCEPQVRQSAKVQFGDYQANGMMAVAKKLGMAPRQLAEQVLTHLDLSGIASKVEIAGPGFINIFLEPAFLAEQVQQALASERLGVSQPTRQTIVVDYSAPNVAKEMHVGHLRSTIIGDAAVRTLEFLGHHVIRANHVGDWGTQFGMLIAWLEKQQQENAGDMALADLEGFYRDAKKHYDEDEAFAERARNYVVKLQSGDTYFREMWRKLVDITMTQNQITYDRLNVTLTRDDVMGESLYNPMLPGIVADLKAKGLAVESEGATVVFLDEFKNKEGDPMGVIIQKKDGGYLYTTTDIACAKYRYETLHADRVLYYIDSRQHQHLMQAWTIVRKAGYVPDSVPLEHHMFGMMLGKDGKPFKTRAGGTVKLADLLDEALERARRLVAEKNPDMPADELEKLANAVGIGAVKYADLSKNRTTDYIFDWDNMLAFEGNTAPYMQYAYTRVLSVFRKADIDEQALASAPVIISEDREAQLAARLLQFEETLTVVAREGTPHVMCAYLYDVAGLFSGFYEHCPILSAENDAVRNSRLKLAQLTAKTLKLGLDTLGIETVERM.

The 'HIGH' region signature appears at 122–132 (PNVAKEMHVGH).

The protein belongs to the class-I aminoacyl-tRNA synthetase family. As to quaternary structure, monomer.

Its subcellular location is the cytoplasm. The enzyme catalyses tRNA(Arg) + L-arginine + ATP = L-arginyl-tRNA(Arg) + AMP + diphosphate. This chain is Arginine--tRNA ligase, found in Salmonella schwarzengrund (strain CVM19633).